The primary structure comprises 159 residues: UPF0262 protein CCNA_02430 (159 aa).

The protein belongs to the UPF0262 family.

This is UPF0262 protein CCNA_02430 from Caulobacter vibrioides (strain NA1000 / CB15N) (Caulobacter crescentus).